We begin with the raw amino-acid sequence, 343 residues long: Heme A synthase (343 aa).

8 helical membrane-spanning segments follow: residues 13-33 (VALWLFVVAVLVFAMVVVGGA), 96-116 (HRLLGRLVGVVFAIPFVFFLI), 130-150 (VLLGLGGLQGVVGWWMVSSGL), 165-185 (LGLALALFVFVIWTALDAWAG), 197-217 (GWALAFLGAVFFQSLLGALVA), 258-278 (LHHRLMAYALFVAAIVAGVAA), 290-310 (LTAFVLVGVVCLQAGLGIWTL), and 311-331 (MTAVPLALGVLHQAGAAILLA). Residue His-260 participates in heme binding. His-322 contacts heme.

It belongs to the COX15/CtaA family. Type 2 subfamily. As to quaternary structure, interacts with CtaB. The cofactor is heme b.

It localises to the cell membrane. The enzyme catalyses Fe(II)-heme o + 2 A + H2O = Fe(II)-heme a + 2 AH2. It participates in porphyrin-containing compound metabolism; heme A biosynthesis; heme A from heme O: step 1/1. Its function is as follows. Catalyzes the conversion of heme O to heme A by two successive hydroxylations of the methyl group at C8. The first hydroxylation forms heme I, the second hydroxylation results in an unstable dihydroxymethyl group, which spontaneously dehydrates, resulting in the formyl group of heme A. This Caulobacter sp. (strain K31) protein is Heme A synthase.